Here is a 372-residue protein sequence, read N- to C-terminus: MRSIIADSKRLVVKVGSSLVTNDGKGLDHAAIGRWAAQIAALRAQGKEVVLVSSGAIAEGMQRLGWSKRPREIDELQAAAAVGQMGLAQVYESRFTEHGIRTAQILLTHADLADRERYLNARSTLLTLLRLGVVPIINENDTVVTDEIKFGDNDTLGALVANLIEGDALIILTDQSGLFTADPRKDPAATLVAEANAGAPELEAMAGGAGSSLGRGGMLTKILAAKRAAHSGANTVIASGREPDVLVRLAGGEAIGTQLIARTARMAARKQWMADHLQVRGHVVIDAGAVEKLTAGGKSLLPIGVTDVQGAFARGEVIACVGPDGREVARGLTNYSSAETKLIHRKPSGEIESVLGYMLEPELIHRDNLVLV.

Position 14 (Lys-14) interacts with ATP. 3 residues coordinate substrate: Ser-54, Asp-141, and Asn-153. 173-174 (TD) lines the ATP pocket. A PUA domain is found at 280–358 (RGHVVIDAGA…GEIESVLGYM (79 aa)).

Belongs to the glutamate 5-kinase family.

The protein resides in the cytoplasm. It carries out the reaction L-glutamate + ATP = L-glutamyl 5-phosphate + ADP. The protein operates within amino-acid biosynthesis; L-proline biosynthesis; L-glutamate 5-semialdehyde from L-glutamate: step 1/2. Functionally, catalyzes the transfer of a phosphate group to glutamate to form L-glutamate 5-phosphate. The sequence is that of Glutamate 5-kinase from Burkholderia multivorans (strain ATCC 17616 / 249).